Reading from the N-terminus, the 300-residue chain is N-acetylmuramic acid 6-phosphate etherase (300 aa).

One can recognise an SIS domain in the interval 57–220 (VSAAFARQGR…SSAAMIRSGK (164 aa)). Residue E85 is the Proton donor of the active site. The active site involves E116.

It belongs to the GCKR-like family. MurNAc-6-P etherase subfamily. Homodimer.

The catalysed reaction is N-acetyl-D-muramate 6-phosphate + H2O = N-acetyl-D-glucosamine 6-phosphate + (R)-lactate. It functions in the pathway amino-sugar metabolism; N-acetylmuramate degradation. Its pathway is amino-sugar metabolism; 1,6-anhydro-N-acetylmuramate degradation. The protein operates within cell wall biogenesis; peptidoglycan recycling. Its function is as follows. Specifically catalyzes the cleavage of the D-lactyl ether substituent of MurNAc 6-phosphate, producing GlcNAc 6-phosphate and D-lactate. Together with AnmK, is also required for the utilization of anhydro-N-acetylmuramic acid (anhMurNAc) either imported from the medium or derived from its own cell wall murein, and thus plays a role in cell wall recycling. This Edwardsiella ictaluri (strain 93-146) protein is N-acetylmuramic acid 6-phosphate etherase.